Consider the following 64-residue polypeptide: Large ribosomal subunit protein bL35 (64 aa).

Positions Met-1–Leu-44 are disordered. Positions Ala-10–Leu-44 are enriched in basic residues.

The protein belongs to the bacterial ribosomal protein bL35 family.

This chain is Large ribosomal subunit protein bL35, found in Halorhodospira halophila (strain DSM 244 / SL1) (Ectothiorhodospira halophila (strain DSM 244 / SL1)).